A 261-amino-acid polypeptide reads, in one-letter code: MEMO1 family protein AF_2310 (261 aa).

This sequence belongs to the MEMO1 family.

In Archaeoglobus fulgidus (strain ATCC 49558 / DSM 4304 / JCM 9628 / NBRC 100126 / VC-16), this protein is MEMO1 family protein AF_2310.